A 121-amino-acid chain; its full sequence is Flagellar protein FliT (121 aa).

The tract at residues 1–50 (MNNAPHLYFAWQQLVEKSQLMLRLATEEQWDELITSEMAYVNAVQEIAHL) is required for homodimerization. The segment at 60–98 (MQEQLRPMLRLILDNESKVKQLLQIRMDELAKLVGQSSV) is fliD binding.

This sequence belongs to the FliT family. In terms of assembly, homodimer. Interacts with FliD and FlhC.

The protein localises to the cytoplasm. It is found in the cytosol. Functionally, dual-function protein that regulates the transcription of class 2 flagellar operons and that also acts as an export chaperone for the filament-capping protein FliD. As a transcriptional regulator, acts as an anti-FlhDC factor; it directly binds FlhC, thus inhibiting the binding of the FlhC/FlhD complex to class 2 promoters, resulting in decreased expression of class 2 flagellar operons. As a chaperone, effects FliD transition to the membrane by preventing its premature polymerization, and by directing it to the export apparatus. In Escherichia coli (strain 55989 / EAEC), this protein is Flagellar protein FliT.